We begin with the raw amino-acid sequence, 163 residues long: Succinate dehydrogenase assembly factor 2-A, mitochondrial (163 aa).

The transit peptide at 1–23 (MLRQLRLTMDISGWIFLPWRRSM) directs the protein to the mitochondrion.

Belongs to the SDHAF2 family. Interacts with the flavoprotein subunit within the SDH catalytic dimer.

The protein localises to the mitochondrion matrix. Functionally, plays an essential role in the assembly of succinate dehydrogenase (SDH), an enzyme complex (also referred to as respiratory complex II) that is a component of both the tricarboxylic acid (TCA) cycle and the mitochondrial electron transport chain, and which couples the oxidation of succinate to fumarate with the reduction of ubiquinone (coenzyme Q) to ubiquinol. Required for flavinylation (covalent attachment of FAD) of the flavoprotein subunit of the SDH catalytic dimer. The polypeptide is Succinate dehydrogenase assembly factor 2-A, mitochondrial (Drosophila sechellia (Fruit fly)).